The primary structure comprises 488 residues: Glycogen synthase (488 aa).

Arg20 is an ADP-alpha-D-glucose binding site.

The protein belongs to the glycosyltransferase 1 family. Bacterial/plant glycogen synthase subfamily.

The catalysed reaction is [(1-&gt;4)-alpha-D-glucosyl](n) + ADP-alpha-D-glucose = [(1-&gt;4)-alpha-D-glucosyl](n+1) + ADP + H(+). The protein operates within glycan biosynthesis; glycogen biosynthesis. Synthesizes alpha-1,4-glucan chains using ADP-glucose. The sequence is that of Glycogen synthase from Chlorobaculum tepidum (strain ATCC 49652 / DSM 12025 / NBRC 103806 / TLS) (Chlorobium tepidum).